The primary structure comprises 272 residues: Testis-specific gene 13 protein (272 aa).

This is Testis-specific gene 13 protein (TSGA13) from Bos taurus (Bovine).